The chain runs to 795 residues: uncharacterized protein (795 aa).

Residues 228-280 adopt a coiled-coil conformation; it reads NIICFKNKCKNNEKEKKEEEEDHDHDHDDKKKEKEDKEKEEEEEEEDSNDDFE. Disordered stretches follow at residues 242–278, 326–430, 455–484, and 673–743; these read EKKE…SNDD, TTTT…TPNR, INQQ…KSEP, and NNNN…NENE. Positions 251-264 are enriched in basic and acidic residues; sequence DHDHDDKKKEKEDK. Acidic residues predominate over residues 265 to 278; that stretch reads EKEEEEEEEDSNDD. Residues 326–345 are compositionally biased toward low complexity; it reads TTTTTVNGSKNSSNTTTPIT. Positions 362–373 are enriched in acidic residues; it reads DDDDDDDLTDED. Positions 377–398 are enriched in polar residues; the sequence is HNEIYSTSPKVSHSTFCQSSPT. Composition is skewed to low complexity over residues 399–414, 455–480, and 673–729; these read LLDL…QQQQ, INQQ…SSNI, and NNNN…NQNE. Residues 732–743 show a composition bias toward basic and acidic residues; sequence NENKNENENENE.

This is an uncharacterized protein from Dictyostelium discoideum (Social amoeba).